The primary structure comprises 212 residues: Methylthioribulose-1-phosphate dehydratase (212 aa).

Residues His97 and His99 each contribute to the Zn(2+) site.

Belongs to the aldolase class II family. MtnB subfamily. Homotetramer. Zn(2+) serves as cofactor.

It catalyses the reaction 5-(methylsulfanyl)-D-ribulose 1-phosphate = 5-methylsulfanyl-2,3-dioxopentyl phosphate + H2O. It participates in amino-acid biosynthesis; L-methionine biosynthesis via salvage pathway; L-methionine from S-methyl-5-thio-alpha-D-ribose 1-phosphate: step 2/6. Functionally, catalyzes the dehydration of methylthioribulose-1-phosphate (MTRu-1-P) into 2,3-diketo-5-methylthiopentyl-1-phosphate (DK-MTP-1-P). The polypeptide is Methylthioribulose-1-phosphate dehydratase (Bacillus thuringiensis (strain Al Hakam)).